A 45-amino-acid chain; its full sequence is Photosystem II reaction center protein K (45 aa).

Residues 1–8 constitute a propeptide that is removed on maturation; sequence MDVNFLLS. Residues 20–40 form a helical membrane-spanning segment; sequence IVDVMPAIPVFFLLLAFVWQA.

Belongs to the PsbK family. In terms of assembly, PSII is composed of 1 copy each of membrane proteins PsbA, PsbB, PsbC, PsbD, PsbE, PsbF, PsbH, PsbI, PsbJ, PsbK, PsbL, PsbM, PsbT, PsbX, PsbY, PsbZ, Psb30/Ycf12, at least 3 peripheral proteins of the oxygen-evolving complex and a large number of cofactors. It forms dimeric complexes.

The protein resides in the plastid. It is found in the chloroplast thylakoid membrane. In terms of biological role, one of the components of the core complex of photosystem II (PSII). PSII is a light-driven water:plastoquinone oxidoreductase that uses light energy to abstract electrons from H(2)O, generating O(2) and a proton gradient subsequently used for ATP formation. It consists of a core antenna complex that captures photons, and an electron transfer chain that converts photonic excitation into a charge separation. In Emiliania huxleyi (Coccolithophore), this protein is Photosystem II reaction center protein K.